The chain runs to 97 residues: Exodeoxyribonuclease 7 small subunit (97 aa).

The disordered stretch occupies residues 64–97 (NGQLHPAEEKGDDVSNNGVQNQGYKSQFLDGDVF). The segment covering 77–88 (VSNNGVQNQGYK) has biased composition (polar residues).

The protein belongs to the XseB family. Heterooligomer composed of large and small subunits.

Its subcellular location is the cytoplasm. The catalysed reaction is Exonucleolytic cleavage in either 5'- to 3'- or 3'- to 5'-direction to yield nucleoside 5'-phosphates.. Bidirectionally degrades single-stranded DNA into large acid-insoluble oligonucleotides, which are then degraded further into small acid-soluble oligonucleotides. This chain is Exodeoxyribonuclease 7 small subunit, found in Limosilactobacillus fermentum (strain NBRC 3956 / LMG 18251) (Lactobacillus fermentum).